We begin with the raw amino-acid sequence, 306 residues long: Ornithine carbamoyltransferase (306 aa).

Carbamoyl phosphate is bound by residues S46–T49, Q73, R97, and H124–Q127. L-ornithine-binding positions include N156, D220, and S224–M225. Carbamoyl phosphate-binding positions include C260–L261 and R288.

Belongs to the aspartate/ornithine carbamoyltransferase superfamily. OTCase family.

The protein localises to the cytoplasm. It catalyses the reaction carbamoyl phosphate + L-ornithine = L-citrulline + phosphate + H(+). It functions in the pathway amino-acid biosynthesis; L-arginine biosynthesis; L-arginine from L-ornithine and carbamoyl phosphate: step 1/3. Its function is as follows. Reversibly catalyzes the transfer of the carbamoyl group from carbamoyl phosphate (CP) to the N(epsilon) atom of ornithine (ORN) to produce L-citrulline. In Campylobacter jejuni (strain RM1221), this protein is Ornithine carbamoyltransferase.